Consider the following 254-residue polypeptide: MAIANKNIIFVAGLGGIGFDTSREIVKKGPKNLVILDRIENPAAIAELKALNPKVTVTFYLYDVTVSVAESTKLLQKIFDQLKTVDLLINGAGILDDHQIERTIAVNFTGTVNTITAIMSFWDKRKGGPGGVIANVCSVTGFNAIYQVPVYSASKAAALSFTNSLAKLAPITGVTAYSINPGITKTPLLHKFNSWLDVEPRVGELLLEHPTQTSLECAQNFVKAIEANQNGAIWKVDLGTLEAIEWTKHWDSHI.

10–33 contacts NAD(+); it reads FVAGLGGIGFDTSREIVKKGPKNL. S138 is a substrate binding site. Y151 (proton acceptor) is an active-site residue.

It belongs to the short-chain dehydrogenases/reductases (SDR) family. As to quaternary structure, homodimer.

It catalyses the reaction a primary alcohol + NAD(+) = an aldehyde + NADH + H(+). The catalysed reaction is a secondary alcohol + NAD(+) = a ketone + NADH + H(+). This chain is Alcohol dehydrogenase 1 (Adh1), found in Drosophila mojavensis (Fruit fly).